A 525-amino-acid chain; its full sequence is MTTEGVVIDGESLTPAAVDAVARHDAPVSIAAGAREAVRESRARIADVLGGDEAVYGVNTGFGSMSDTRIDAADREALQANLVRSHAAGAGSELDTAAVRALLVTRLNALAKGYSGIRERVLDVLVGLLNEGVHPVVPSRGSLGASGDLAPLAHMSRVLIGEGQADVAGERMPAAEALAAADLEPVTLQAKEGLALINGTQLTTGVAALALVDAERVLRSADTAGALTTEVTMSTTASCAPAIHEVRPHDGQAVSARHIRNLTAGSEVLDHHRDCDRVQDAYSIRCLPQVHGAVRDALDHLRAAVATELNSATDNPLVFAGDRVGPRASGTDRAAVVSGGNFHGEVLALRLGYAASALAELAAISERRTDRLLNPETQEPHLEPFLAPDSGLHSGLMIPQYTAASLVNDLRSLGQPTLDNASVSGAQEDHVSMSAGAAYNFREAVEKAATVVGVELLCGAQGREFLDPDLALGAGTAAAYDLVREVSEPVAGDRALADDMAAVGDLVRAGLVEDAVARALDAPLA.

The segment at residues 145 to 147 (ASG) is a cross-link (5-imidazolinone (Ala-Gly)). 2,3-didehydroalanine (Ser) is present on Ser146.

The protein belongs to the PAL/histidase family. Contains an active site 4-methylidene-imidazol-5-one (MIO), which is formed autocatalytically by cyclization and dehydration of residues Ala-Ser-Gly.

It is found in the cytoplasm. The catalysed reaction is L-histidine = trans-urocanate + NH4(+). Its pathway is amino-acid degradation; L-histidine degradation into L-glutamate; N-formimidoyl-L-glutamate from L-histidine: step 1/3. The protein is Probable histidine ammonia-lyase of Halobacterium salinarum (strain ATCC 29341 / DSM 671 / R1).